The sequence spans 376 residues: E3 ubiquitin-protein ligase RNF133 (376 aa).

The PA domain maps to Ser65–Ile167. The chain crosses the membrane as a helical span at residues Tyr190 to Ile210. An RING-type; atypical zinc finger spans residues Cys256 to Lys297. The segment at Thr328–Pro376 is disordered. Residues Asn355 to His366 show a composition bias toward polar residues.

As to quaternary structure, interacts with E3 ligase UBE2J1. In terms of processing, auto-ubiquitinated.

The protein localises to the endoplasmic reticulum membrane. The enzyme catalyses S-ubiquitinyl-[E2 ubiquitin-conjugating enzyme]-L-cysteine + [acceptor protein]-L-lysine = [E2 ubiquitin-conjugating enzyme]-L-cysteine + N(6)-ubiquitinyl-[acceptor protein]-L-lysine.. The protein operates within protein modification; protein ubiquitination. Its function is as follows. Has E3 ubiquitin-protein ligase activity. Plays a role in male fecundity through the interaction with the E2 ubituitin-protein ligase UBE2J1. In Macaca fascicularis (Crab-eating macaque), this protein is E3 ubiquitin-protein ligase RNF133 (RNF133).